The following is a 147-amino-acid chain: Deoxyuridine 5'-triphosphate nucleotidohydrolase (147 aa).

Residue Arg-24 participates in Mg(2+) binding. Residues 68–70 (PRS), 82–85 (GVID), Tyr-88, Gly-93, Ile-95, and Arg-111 contribute to the dUTP site.

The protein belongs to the dUTPase family.

It carries out the reaction dUTP + H2O = dUMP + diphosphate + H(+). Functionally, this enzyme is involved in nucleotide metabolism: it produces dUMP, the immediate precursor of thymidine nucleotides and it decreases the intracellular concentration of dUTP so that uracil cannot be incorporated into DNA. In Homo sapiens (Human), this protein is Deoxyuridine 5'-triphosphate nucleotidohydrolase (OPG046).